The following is a 431-amino-acid chain: Adenylosuccinate synthetase (431 aa).

GTP contacts are provided by residues 12-18 and 40-42; these read GDEGKGK and GHT. Catalysis depends on Asp-13, which acts as the Proton acceptor. The Mg(2+) site is built by Asp-13 and Gly-40. Residues 13 to 16, 38 to 41, Thr-131, Arg-145, Gln-225, Thr-240, and Arg-304 contribute to the IMP site; these read DEGK and NAGH. The active-site Proton donor is the His-41. Residue 300 to 306 coordinates substrate; it reads VNTGRRR. Residues Arg-306, 332–334, and 414–416 contribute to the GTP site; these read KLD and STS.

This sequence belongs to the adenylosuccinate synthetase family. Homodimer. It depends on Mg(2+) as a cofactor.

It is found in the cytoplasm. The catalysed reaction is IMP + L-aspartate + GTP = N(6)-(1,2-dicarboxyethyl)-AMP + GDP + phosphate + 2 H(+). It functions in the pathway purine metabolism; AMP biosynthesis via de novo pathway; AMP from IMP: step 1/2. Functionally, plays an important role in the de novo pathway of purine nucleotide biosynthesis. Catalyzes the first committed step in the biosynthesis of AMP from IMP. The chain is Adenylosuccinate synthetase from Beijerinckia indica subsp. indica (strain ATCC 9039 / DSM 1715 / NCIMB 8712).